A 368-amino-acid chain; its full sequence is Glutamate 5-kinase (368 aa).

Residue lysine 9 coordinates ATP. Residues serine 49, aspartate 136, and asparagine 148 each contribute to the substrate site. Residues 168-169 and 210-216 contribute to the ATP site; these read TD and TGGMMTK. The 79-residue stretch at 275–353 folds into the PUA domain; that stretch reads AGIITIDDGA…ADIENVLGYE (79 aa).

Belongs to the glutamate 5-kinase family.

The protein resides in the cytoplasm. The enzyme catalyses L-glutamate + ATP = L-glutamyl 5-phosphate + ADP. The protein operates within amino-acid biosynthesis; L-proline biosynthesis; L-glutamate 5-semialdehyde from L-glutamate: step 1/2. In terms of biological role, catalyzes the transfer of a phosphate group to glutamate to form L-glutamate 5-phosphate. This Haemophilus influenzae (strain 86-028NP) protein is Glutamate 5-kinase.